Consider the following 362-residue polypeptide: Protein RecA (362 aa).

Position 77 to 84 (Gly-77 to Thr-84) interacts with ATP.

Belongs to the RecA family.

It is found in the cytoplasm. Functionally, can catalyze the hydrolysis of ATP in the presence of single-stranded DNA, the ATP-dependent uptake of single-stranded DNA by duplex DNA, and the ATP-dependent hybridization of homologous single-stranded DNAs. It interacts with LexA causing its activation and leading to its autocatalytic cleavage. The chain is Protein RecA from Rhizobium etli (strain CIAT 652).